Here is a 150-residue protein sequence, read N- to C-terminus: Heavy metal-associated isoprenylated plant protein 24 (150 aa).

The 64-residue stretch at 26-89 (QTVALRVARI…AAKSTKKKVE (64 aa)) folds into the HMA domain. The a metal cation site is built by cysteine 37 and cysteine 40. Residue cysteine 147 is modified to Cysteine methyl ester. Cysteine 147 carries S-farnesyl cysteine lipidation. The propeptide at 148–150 (AIM) is removed in mature form.

Belongs to the HIPP family. As to quaternary structure, interacts with ZHD11/HB29.

Its function is as follows. Heavy-metal-binding protein. The chain is Heavy metal-associated isoprenylated plant protein 24 from Arabidopsis thaliana (Mouse-ear cress).